A 1744-amino-acid chain; its full sequence is Tanabin (1744 aa).

A head region spans residues 1–12 (MEGYLASVSLGE). The coil 1A stretch occupies residues 8–48 (VSLGEESTQMWSLNKRLEAYLSRVKALEEENELLRKEIHSL). The region spanning 13–320 (ESTQMWSLNK…SLLEAESTRI (308 aa)) is the IF rod domain. Residues 49 to 60 (RSSKSERCWKKK) are linker 1. The segment at 61–156 (HHEEMMKLRD…RDHEEEKALM (96 aa)) is coil 1B. The linker 12 stretch occupies residues 157-179 (EEEIASFSQRLENFRVAPVAFKP). Residues 180–193 (VEVDDYARKLSEIW) form a coil 2A region. Positions 194–199 (QGAVEE) are linker 2. The interval 200 to 314 (YKSEVSVLEA…EVATYRSLLE (115 aa)) is coil 2B. A tail region spans residues 315 to 1744 (AESTRIYTDY…KKALRWKRMF (1430 aa)). Composition is skewed to basic and acidic residues over residues 341–371 (RRRQ…KNEL) and 785–815 (HSHH…DKSS). 7 disordered regions span residues 341 to 372 (RRRQ…NELQ), 785 to 816 (HSHH…KSSE), 976 to 996 (EENQ…DIEE), 1032 to 1093 (SMED…QQED), 1340 to 1470 (DSDL…FGDV), 1485 to 1506 (SGLA…SMEN), and 1560 to 1722 (AREK…LNGH). Residues 980-990 (LSENEGNQNFG) show a composition bias toward polar residues. Acidic residues predominate over residues 1034-1056 (EDEEEQNNPETEDNIGLEQESDQ). Over residues 1074–1086 (VVFKPEDMSDKSE) the composition is skewed to basic and acidic residues. The span at 1340-1351 (DSDLESTEEQVQ) shows a compositional bias: acidic residues. The span at 1352–1367 (ETERIPFKPEDSKMEN) shows a compositional bias: basic and acidic residues. Residues 1368 to 1377 (ENSESEESVD) are compositionally biased toward acidic residues. Positions 1386–1398 (HKSEEFEISKDYQ) are enriched in basic and acidic residues. A compositionally biased stretch (acidic residues) spans 1412 to 1421 (LEDEFEDLTE). Residues 1423–1432 (PDVHEEHQNN) are compositionally biased toward basic and acidic residues. Residues 1433–1442 (DDSGASTFIT) show a composition bias toward polar residues. Positions 1445–1460 (DEDKEREVRESVSKDE) are enriched in basic and acidic residues. Positions 1496-1505 (DNEESEDSME) are enriched in acidic residues. Composition is skewed to polar residues over residues 1576–1586 (EFTNENQSASP), 1597–1621 (EDSV…TSIS), and 1629–1639 (SNISTTEQSST). The span at 1680–1691 (RSEDEELDDEGS) shows a compositional bias: acidic residues. Residues 1698-1709 (NDEKANGEHKDV) show a composition bias toward basic and acidic residues.

It belongs to the intermediate filament family. In terms of tissue distribution, growth cones of embryonic vertebrate neurons.

The chain is Tanabin from Xenopus laevis (African clawed frog).